Reading from the N-terminus, the 123-residue chain is Gamma-synuclein (123 aa).

Tandem repeats lie at residues 20-30 and 31-41. The 4 X 11 AA tandem repeats of [EGSA]-K-T-K-[EQ]-[GQ]-V-X(4) stretch occupies residues 20 to 67; sequence EKTKQGVTEAAEKTKEGVMYVGTKTKENVVQSVTSVAEKTKEQANAVS. One copy of the 3; approximate repeat lies at 42–56; the sequence is TKTKENVVQSVTSVA. The stretch at 57 to 67 is repeat 4; it reads EKTKEQANAVS. Ser-67 and Ser-72 each carry phosphoserine. The segment at 91-123 is disordered; it reads TTGVVRKEDLEPPAQDQEAKEQEENEEAKSGED. Over residues 107–123 the composition is skewed to basic and acidic residues; sequence QEAKEQEENEEAKSGED. Ser-120 bears the Phosphoserine; by BARK1, CaMK2 and CK2 mark.

The protein belongs to the synuclein family. In terms of assembly, may be a centrosome-associated protein. Interacts with MYOC; affects its secretion and its aggregation. In terms of processing, phosphorylated. Phosphorylation by GRK5 appears to occur on residues distinct from the residue phosphorylated by other kinases. Highly expressed in brain, particularly in the substantia nigra. Also expressed in the corpus callosum, heart, skeletal muscle, ovary, testis, colon and spleen. Weak expression in pancreas, kidney and lung. Expressed predominantly in the cell bodies and axons of primary sensory neurons, sympathetic neurons and motoneurons.

It localises to the cytoplasm. It is found in the perinuclear region. The protein resides in the cytoskeleton. Its subcellular location is the microtubule organizing center. The protein localises to the centrosome. It localises to the spindle. Functionally, plays a role in neurofilament network integrity. May be involved in modulating axonal architecture during development and in the adult. In vitro, increases the susceptibility of neurofilament-H to calcium-dependent proteases. May also function in modulating the keratin network in skin. Activates the MAPK and Elk-1 signal transduction pathway. This is Gamma-synuclein (Sncg) from Mus musculus (Mouse).